The chain runs to 166 residues: NAD(P)H-quinone oxidoreductase subunit I, chloroplastic (166 aa).

2 4Fe-4S ferredoxin-type domains span residues glycine 55–lysine 84 and leucine 95–glutamate 124. Cysteine 64, cysteine 67, cysteine 70, cysteine 74, cysteine 104, cysteine 107, cysteine 110, and cysteine 114 together coordinate [4Fe-4S] cluster.

This sequence belongs to the complex I 23 kDa subunit family. In terms of assembly, NDH is composed of at least 16 different subunits, 5 of which are encoded in the nucleus. [4Fe-4S] cluster is required as a cofactor.

The protein localises to the plastid. Its subcellular location is the chloroplast thylakoid membrane. The enzyme catalyses a plastoquinone + NADH + (n+1) H(+)(in) = a plastoquinol + NAD(+) + n H(+)(out). The catalysed reaction is a plastoquinone + NADPH + (n+1) H(+)(in) = a plastoquinol + NADP(+) + n H(+)(out). NDH shuttles electrons from NAD(P)H:plastoquinone, via FMN and iron-sulfur (Fe-S) centers, to quinones in the photosynthetic chain and possibly in a chloroplast respiratory chain. The immediate electron acceptor for the enzyme in this species is believed to be plastoquinone. Couples the redox reaction to proton translocation, and thus conserves the redox energy in a proton gradient. This is NAD(P)H-quinone oxidoreductase subunit I, chloroplastic from Pentanema britannica (British yellowhead).